A 114-amino-acid chain; its full sequence is Ferredoxin (114 aa).

Positions 9 and 17 each coordinate [3Fe-4S] cluster. [4Fe-4S] cluster-binding residues include C21, C40, C43, and C46. One can recognise a 4Fe-4S ferredoxin-type domain in the interval 31–60 (RMLYINPDECVDCGACKPACRVEAIYWEGD). [3Fe-4S] cluster is bound at residue C50.

Requires [4Fe-4S] cluster as cofactor. [3Fe-4S] cluster serves as cofactor.

Functionally, ferredoxins are iron-sulfur proteins that transfer electrons in a wide variety of metabolic reactions. This is Ferredoxin (fdxA) from Mycobacterium tuberculosis (strain ATCC 25618 / H37Rv).